The sequence spans 37 residues: Large ribosomal subunit protein bL36A (37 aa).

The protein belongs to the bacterial ribosomal protein bL36 family.

The sequence is that of Large ribosomal subunit protein bL36A from Neisseria meningitidis serogroup C (strain 053442).